The following is a 274-amino-acid chain: Penicillin-insensitive murein endopeptidase (274 aa).

The N-terminal stretch at 1 to 19 is a signal peptide; the sequence is MNKTAIALLALLASSVSLA. Cystine bridges form between C44/C265, C187/C235, and C216/C223. Zn(2+) contacts are provided by H110, H113, D120, D147, H150, and H211. The interval 227–274 is disordered; sequence PLPPPGDGCGAELQSWFEPPKPGTTKPEKKTPPPLPPSCQALLDEHVI.

The protein belongs to the peptidase M74 family. As to quaternary structure, dimer. It depends on Zn(2+) as a cofactor.

It localises to the periplasm. In terms of biological role, murein endopeptidase that cleaves the D-alanyl-meso-2,6-diamino-pimelyl amide bond that connects peptidoglycan strands. Likely plays a role in the removal of murein from the sacculus. The polypeptide is Penicillin-insensitive murein endopeptidase (Shigella dysenteriae serotype 1 (strain Sd197)).